Here is a 241-residue protein sequence, read N- to C-terminus: Cysteine-rich secretory protein 3 (241 aa).

Positions 1-19 (MALMLVLFFLAAVLPPSLL) are cleaved as a signal peptide. The SCP domain occupies 44–170 (SKHNQLRRKV…PLRYFYVCRY (127 aa)). Residues asparagine 118, asparagine 132, and asparagine 175 are each glycosylated (N-linked (GlcNAc...) asparagine). Intrachain disulfides connect cysteine 194–cysteine 201, cysteine 197–cysteine 206, cysteine 210–cysteine 241, cysteine 219–cysteine 235, and cysteine 226–cysteine 239. The 32-residue stretch at 210–241 (CQYKDMSFWCKRLEYVCKHPGLKKRCLATCQC) folds into the ShKT domain.

This sequence belongs to the CRISP family. In terms of assembly, interacts with A1BG. Interacts with KNG1 isoform LMW. As to expression, expressed in submandibular gland.

The protein resides in the cytoplasmic vesicle. It localises to the secretory vesicle. This protein is supposed to help spermatozoa undergo functional maturation while they move from the testis to the ductus deferens. This chain is Cysteine-rich secretory protein 3 (Crisp3), found in Mus musculus (Mouse).